The chain runs to 663 residues: Inner nuclear membrane protein HEH2 (663 aa).

2 disordered regions span residues 46 to 188 (QRLQ…ELPN) and 267 to 289 (ISET…KNIR). Residues 47–62 (RLQSSPEASKVRTSIQ) show a composition bias toward polar residues. A compositionally biased stretch (basic and acidic residues) spans 91-123 (KTVKDENVETNKRKREQISTDNEAKMQIQEEKS). Phosphoserine is present on Ser123. The segment covering 124–134 (PKKKRKKRSSK) has biased composition (basic residues). Residues 124-137 (PKKKRKKRSSKANK) carry the Nuclear localization signal motif. Basic and acidic residues predominate over residues 164-183 (EELHKKDSSDDKPRVKELPK). Residues 317–337 (LFIWLWNGAIFLSIICPILFG) traverse the membrane as a helical segment.

In terms of assembly, interacts with SRP1.

The protein resides in the nucleus inner membrane. The protein is Inner nuclear membrane protein HEH2 (HEH2) of Saccharomyces cerevisiae (strain ATCC 204508 / S288c) (Baker's yeast).